The primary structure comprises 411 residues: Acetyl-coenzyme A carboxylase carboxyl transferase subunit beta, chloroplastic (411 aa).

In terms of domain architecture, CoA carboxyltransferase N-terminal spans 32–302 (LWTRCDHCGV…KEQGRIPYGE (271 aa)). Zn(2+)-binding residues include Cys-36, Cys-39, Cys-55, and Cys-58. A C4-type zinc finger spans residues 36-58 (CDHCGVILYIKHLKENQRVCFGC).

Belongs to the AccD/PCCB family. As to quaternary structure, acetyl-CoA carboxylase is a heterohexamer composed of biotin carboxyl carrier protein, biotin carboxylase and 2 subunits each of ACCase subunit alpha and ACCase plastid-coded subunit beta (accD). It depends on Zn(2+) as a cofactor.

Its subcellular location is the plastid. It is found in the chloroplast stroma. The catalysed reaction is N(6)-carboxybiotinyl-L-lysyl-[protein] + acetyl-CoA = N(6)-biotinyl-L-lysyl-[protein] + malonyl-CoA. Its pathway is lipid metabolism; malonyl-CoA biosynthesis; malonyl-CoA from acetyl-CoA: step 1/1. In terms of biological role, component of the acetyl coenzyme A carboxylase (ACC) complex. Biotin carboxylase (BC) catalyzes the carboxylation of biotin on its carrier protein (BCCP) and then the CO(2) group is transferred by the transcarboxylase to acetyl-CoA to form malonyl-CoA. The polypeptide is Acetyl-coenzyme A carboxylase carboxyl transferase subunit beta, chloroplastic (Chlorella vulgaris (Green alga)).